Consider the following 189-residue polypeptide: Elongation factor P (189 aa).

An N6-(3,6-diaminohexanoyl)-5-hydroxylysine modification is found at K34.

Belongs to the elongation factor P family. May be beta-lysylated on the epsilon-amino group of Lys-34 by the combined action of EpmA and EpmB, and then hydroxylated on the C5 position of the same residue by EpmC (if this protein is present). Lysylation is critical for the stimulatory effect of EF-P on peptide-bond formation. The lysylation moiety may extend toward the peptidyltransferase center and stabilize the terminal 3-CCA end of the tRNA. Hydroxylation of the C5 position on Lys-34 may allow additional potential stabilizing hydrogen-bond interactions with the P-tRNA.

Its subcellular location is the cytoplasm. The protein operates within protein biosynthesis; polypeptide chain elongation. Involved in peptide bond synthesis. Alleviates ribosome stalling that occurs when 3 or more consecutive Pro residues or the sequence PPG is present in a protein, possibly by augmenting the peptidyl transferase activity of the ribosome. Modification of Lys-34 is required for alleviation. This is Elongation factor P from Teredinibacter turnerae (strain ATCC 39867 / T7901).